The sequence spans 572 residues: Hemolysin-1 (572 aa).

Bacterial hemolysins are exotoxins that attack blood cell membranes and cause cell rupture by mechanisms not clearly defined. The chain is Hemolysin-1 (ash1) from Aeromonas salmonicida.